A 218-amino-acid chain; its full sequence is NAD(P)H-hydrate epimerase (218 aa).

Residues 9–215 (MKKIDQYAID…DIGIPQKAIR (207 aa)) enclose the YjeF N-terminal domain. Residue 55–59 (NNGAD) participates in (6S)-NADPHX binding. K(+)-binding residues include Asn56 and Asp127. Residues 131-137 (GTGLNRT) and Asp160 contribute to the (6S)-NADPHX site. Ser163 serves as a coordination point for K(+).

It belongs to the NnrE/AIBP family. The cofactor is K(+).

It catalyses the reaction (6R)-NADHX = (6S)-NADHX. The catalysed reaction is (6R)-NADPHX = (6S)-NADPHX. Catalyzes the epimerization of the S- and R-forms of NAD(P)HX, a damaged form of NAD(P)H that is a result of enzymatic or heat-dependent hydration. This is a prerequisite for the S-specific NAD(P)H-hydrate dehydratase to allow the repair of both epimers of NAD(P)HX. This Anaerococcus prevotii (strain ATCC 9321 / DSM 20548 / JCM 6508 / NCTC 11806 / PC1) (Peptostreptococcus prevotii) protein is NAD(P)H-hydrate epimerase.